The sequence spans 140 residues: UPF0179 protein Msp_0996 (140 aa).

This sequence belongs to the UPF0179 family.

This is UPF0179 protein Msp_0996 from Methanosphaera stadtmanae (strain ATCC 43021 / DSM 3091 / JCM 11832 / MCB-3).